The sequence spans 194 residues: RNA polymerase II subunit A C-terminal domain phosphatase SSU72 like protein 4 (194 aa).

This sequence belongs to the SSU72 phosphatase family.

It localises to the nucleus. The catalysed reaction is O-phospho-L-seryl-[protein] + H2O = L-seryl-[protein] + phosphate. It catalyses the reaction O-phospho-L-threonyl-[protein] + H2O = L-threonyl-[protein] + phosphate. Its function is as follows. Protein phosphatase that catalyzes the dephosphorylation of the C-terminal domain of RNA polymerase II. Plays a role in RNA processing and termination. This is RNA polymerase II subunit A C-terminal domain phosphatase SSU72 like protein 4 from Homo sapiens (Human).